The sequence spans 606 residues: Gastrula zinc finger protein XlCGF66.1 (606 aa).

Disordered regions lie at residues 1–31 and 240–271; these read MGMW…RGKK and TLHS…KRQK. Positions 242–262 are enriched in basic and acidic residues; the sequence is HSKDSCNEGHKHLSHKSDYNK. 11 consecutive C2H2-type zinc fingers follow at residues 273 to 295, 300 to 322, 328 to 350, 384 to 407, 413 to 435, 441 to 464, 470 to 492, 498 to 521, 527 to 549, 555 to 578, and 584 to 606; these read FSCS…QKTH, LLCL…RQTH, FSCS…QITH, DFCS…QQVH, FSCT…QRTH, YSCS…QQVH, FFCS…QRTH, FSCS…QRTH, DFCF…QQVH, and FSCS…HRTH.

It belongs to the krueppel C2H2-type zinc-finger protein family.

The protein localises to the nucleus. Functionally, may be involved in transcriptional regulation. In Xenopus laevis (African clawed frog), this protein is Gastrula zinc finger protein XlCGF66.1.